The following is a 1582-amino-acid chain: Dynein axonemal assembly factor 1 homolog (1582 aa).

LRR repeat units follow at residues 38-60, 61-82, 83-104, 105-126, 129-150, and 154-175; these read RLNDVLYLHFQGYQCIENLDEYT, ELKSLWLESNAISEIQNLTKLT, KLKCLYLQNNLITKMENLEFNR, ELDTLNLSQNHIRKIENIGTDI, VLNTLNITSNYLTDSASLAALV, and TLSVLDLSNNRIDDILIVKIFE. The LRRCT domain maps to 189–227; the sequence is PVVSRLPQYRKTLILACKELTYLDSRPVFPRDRACAEAW. Disordered stretches follow at residues 245 to 420, 560 to 587, 859 to 878, 913 to 942, 1073 to 1092, 1101 to 1137, 1150 to 1218, 1305 to 1345, 1358 to 1438, 1484 to 1517, and 1529 to 1548; these read AERR…SEMD, SSDVQEQAKDPSESDEEPTEEEMEVKSQ, FSKDTPESLDAQLAKDEDRR, DTGELEELPPPPELISDSESEKEVEEDDDA, SSNEDLEAKHKSNDDPLVER, MQRMKEHEERARELQEQLEKEKEEENSGPIKLSMGEG, TEII…QAEG, KDNE…TAKD, LDPE…PYQT, EDSKIGDGPTEKFLDQKAQDNTENTDERPENPKN, and PSESLEDTEATETPEVSTEQ. Residues 313 to 327 are compositionally biased toward low complexity; that stretch reads ESQASEHSTTSSTSA. Residues 339 to 392 show a composition bias toward basic and acidic residues; that stretch reads HIAERISNRRVKPLEGRPKVLYDEAASGDEKAVTTTDSKKDSNAEDLPELKDIT. Polar residues predominate over residues 409–420; sequence TLLQSDSGSEMD. Positions 572-582 are enriched in acidic residues; that stretch reads ESDEEPTEEEM. The segment covering 928 to 942 has biased composition (acidic residues); it reads SDSESEKEVEEDDDA. 2 stretches are compositionally biased toward basic and acidic residues: residues 1078 to 1092 and 1103 to 1125; these read LEAKHKSNDDPLVER and RMKEHEERARELQEQLEKEKEEE. Positions 1166–1178 are enriched in low complexity; the sequence is EGGAQQEEGGAQS. Basic and acidic residues-rich tracts occupy residues 1321-1335, 1398-1427, and 1484-1514; these read PKEEHIPEVKSETET, SALKETTEIGDSEKQENKTQDETLDPKDTE, and EDSKIGDGPTEKFLDQKAQDNTENTDERPEN. Over residues 1529-1540 the composition is skewed to acidic residues; that stretch reads PSESLEDTEATE.

The protein belongs to the DNAAF1 family.

Its subcellular location is the cell projection. It localises to the cilium. Functionally, cilium-specific protein required for cilia structures. This is Dynein axonemal assembly factor 1 homolog (dtr) from Drosophila pseudoobscura pseudoobscura (Fruit fly).